The sequence spans 404 residues: MGVQRLALALIAFTSALTSVIAAPIVIEQPPLGPEHRYDAIVIGGGPSGLSALSSLGRVRRHVLLFDEGIYRNGATRHIHDMLTNDGVEPKVFRAKARQQISRYTSTSIKDVKVTKIKKVFEHGGRKYFFQVTDKTGAMYTASKVVLGTGVLDVLPGTPGLQENFGKGIYWCPWCDGWEHRDQPLGILGPLRHVMDSVYELETLNNDIIAFVNGTEHSVEDILYLNRKYPHWRQQLKHYNVQINNKMVSSIDRLQDGSKHQDKKTWQEFDKFRVNFNDGTSVERSVFITNFPTEQHSDLPDQLGLARDPIHKNKIKVNFKGMRASVPGVFVVGDANNDGSTNGNHAMFSGKRAAVALHVELEQERAEAALGKRDESFSAEQVENEALKLIGRDTEELEELWGRK.

An N-terminal signal peptide occupies residues 1–22 (MGVQRLALALIAFTSALTSVIA). 67–75 (DEGIYRNGA) serves as a coordination point for FAD. The cysteines at positions 172 and 175 are disulfide-linked. N-linked (GlcNAc...) asparagine glycosylation is present at Asn-213. FAD is bound at residue 334–343 (DANNDGSTNG).

The protein belongs to the class-II pyridine nucleotide-disulfide oxidoreductase family. As to quaternary structure, homodimer. FAD serves as cofactor.

The protein resides in the secreted. It catalyses the reaction [thioredoxin]-dithiol + NADP(+) = [thioredoxin]-disulfide + NADPH + H(+). This Arthroderma benhamiae (strain ATCC MYA-4681 / CBS 112371) (Trichophyton mentagrophytes) protein is Probable thioredoxin reductase ARB_06224.